A 608-amino-acid polypeptide reads, in one-letter code: Elongation factor 4 (608 aa).

Residues 11–193 (KKIRNFSIIA…QIVEKVPEPS (183 aa)) form the tr-type G domain. GTP contacts are provided by residues 23–28 (DHGKST) and 140–143 (NKID).

The protein belongs to the TRAFAC class translation factor GTPase superfamily. Classic translation factor GTPase family. LepA subfamily.

Its subcellular location is the cell membrane. It carries out the reaction GTP + H2O = GDP + phosphate + H(+). Functionally, required for accurate and efficient protein synthesis under certain stress conditions. May act as a fidelity factor of the translation reaction, by catalyzing a one-codon backward translocation of tRNAs on improperly translocated ribosomes. Back-translocation proceeds from a post-translocation (POST) complex to a pre-translocation (PRE) complex, thus giving elongation factor G a second chance to translocate the tRNAs correctly. Binds to ribosomes in a GTP-dependent manner. In Listeria innocua serovar 6a (strain ATCC BAA-680 / CLIP 11262), this protein is Elongation factor 4.